The chain runs to 88 residues: Small ribosomal subunit protein bS20 (88 aa).

Residues 1–27 (MANTASAKKMTRKIAKRTAINRSRRSR) are disordered.

The protein belongs to the bacterial ribosomal protein bS20 family.

Binds directly to 16S ribosomal RNA. The sequence is that of Small ribosomal subunit protein bS20 from Methylobacterium radiotolerans (strain ATCC 27329 / DSM 1819 / JCM 2831 / NBRC 15690 / NCIMB 10815 / 0-1).